The sequence spans 212 residues: High frequency lysogenization protein HflD homolog (212 aa).

This sequence belongs to the HflD family.

It localises to the cytoplasm. Its subcellular location is the cell inner membrane. This Stutzerimonas stutzeri (strain A1501) (Pseudomonas stutzeri) protein is High frequency lysogenization protein HflD homolog.